The sequence spans 858 residues: Zinc finger protein ZXDC (858 aa).

Disordered stretches follow at residues M1 to G127 and P151 to G174. 3 stretches are compositionally biased toward low complexity: residues P23–P35, G84–E97, and P151–S171. The residue at position 34 (S34) is a Phosphoserine. The residue at position 172 (T172) is a Phosphothreonine. C2H2-type zinc fingers lie at residues Y175–H199, F208–H232, F238–H262, F268–H290, Y297–H321, F328–H352, F358–H382, F388–H412, F418–H442, and S451–H476. A required for transcriptional activation region spans residues D579–S688. Residue K660 forms a Glycyl lysine isopeptide (Lys-Gly) (interchain with G-Cter in SUMO) linkage. Disordered regions lie at residues K660–Q696, K726–H756, and G837–Q858. A Phosphoserine modification is found at S665. A compositionally biased stretch (polar residues) spans Q675 to P687. Residues P781 to Q858 are interaction with CIITA. The segment covering F847–Q858 has biased composition (polar residues).

The protein belongs to the ZXD family. In terms of assembly, self-associates. Interacts with ZXDA and CIITA. Sumoylated at Lys-660 with SUMO1, SUMO2 and SUMO3; sumoylation enhances the activity of the transcriptional activation domain. In terms of tissue distribution, expressed at high levels in heart, kidney, liver and testis, at moderate levels in brain and stomach, and at low levels in lung, muscle, placenta, small intestine and spleen.

Its subcellular location is the nucleus. In terms of biological role, cooperates with CIITA to promote transcription of MHC class I and MHC class II genes. The protein is Zinc finger protein ZXDC (ZXDC) of Homo sapiens (Human).